The following is a 123-amino-acid chain: Small ribosomal subunit protein uS12c (123 aa).

Belongs to the universal ribosomal protein uS12 family. Part of the 30S ribosomal subunit.

The protein localises to the plastid. Its subcellular location is the chloroplast. With S4 and S5 plays an important role in translational accuracy. Located at the interface of the 30S and 50S subunits. The chain is Small ribosomal subunit protein uS12c (rps12) from Marchantia polymorpha (Common liverwort).